Consider the following 84-residue polypeptide: UPF0153 protein YeiW (84 aa).

The protein belongs to the UPF0153 family.

The sequence is that of UPF0153 protein YeiW (yeiW) from Escherichia coli (strain K12).